Consider the following 136-residue polypeptide: uncharacterized protein (136 aa).

A disordered region spans residues 1–33 (MRDHLPPGLPPDPFADDPCDPSAALEAVEPGQP).

It to M.leprae ML0386.

This is an uncharacterized protein from Mycobacterium tuberculosis (strain CDC 1551 / Oshkosh).